We begin with the raw amino-acid sequence, 432 residues long: Tyrosine--tRNA ligase (432 aa).

Tyrosine 35 provides a ligand contact to L-tyrosine. The 'HIGH' region signature appears at 40–49 (PTAGSLHVGH). Residues tyrosine 175 and glutamine 179 each contribute to the L-tyrosine site. Residues 239 to 243 (KFGKT) carry the 'KMSKS' region motif. Residue lysine 242 coordinates ATP. In terms of domain architecture, S4 RNA-binding spans 365–422 (PPLVDLFASTGLVPSKSAARRTIQEGGAYLNNAKVTDIEARVSEADLLHGRYLVLRRG).

It belongs to the class-I aminoacyl-tRNA synthetase family. TyrS type 1 subfamily. As to quaternary structure, homodimer.

Its subcellular location is the cytoplasm. It catalyses the reaction tRNA(Tyr) + L-tyrosine + ATP = L-tyrosyl-tRNA(Tyr) + AMP + diphosphate + H(+). Its function is as follows. Catalyzes the attachment of tyrosine to tRNA(Tyr) in a two-step reaction: tyrosine is first activated by ATP to form Tyr-AMP and then transferred to the acceptor end of tRNA(Tyr). This is Tyrosine--tRNA ligase from Thermobifida fusca (strain YX).